The following is a 533-amino-acid chain: MLDFLAANPLIALVVILAVGLAIGQIRVFGLSLGAAAVLFVALVVSTANTDIVIPMIVYQLGLAMFVYVIGLSAGPAFFSEFAKKGWKLTIFMLLLLATLIGLAWVLIKSLGLDAAIGTGMFTGALTSTPGMAAVVELIEGIDPSLASEPVIGYSLAYPGAVLGSIVVAAVGAKLLKVNHREDARKEGMITAPLVWKGVQLKPGITGRVGDLPRLAGESIIATRIVDDPHTHRLADPDLPITEGMELLINGTEEAVDRAIKALGEERETKIEDTELIYTRLTVSSPEVAGRTVAELDTVAHGFMIARIRQGDSEVVPKPDTVINYSDRIRVVVAPGRVAEVRRFLGDSEKSLADVNLLPLAIGLSLGLLLGAIPIPLPGGTTMSLGFGGGPIIAGLILGALKHTGPLTWQMPFHANRTISTLGLALFLAGVGTSAGAGFRAALTDSSSLIYMAGGLVITLASALLCAVIGMWVLRLRWDEAMGVAAGTTTNPAIISYLNGQTGTDLANRGYATVYPTAMIGKILGAQILFLLL.

5 consecutive transmembrane segments (helical) span residues 4–23 (FLAA…GLAI), 28–47 (VFGL…VVST), 57–79 (IVYQ…PAFF), 86–108 (GWKL…WVLI), and 151–173 (VIGY…AVGA). An RCK C-terminal domain is found at 263 to 347 (LGEERETKIE…VAEVRRFLGD (85 aa)). A run of 4 helical transmembrane segments spans residues 352–374 (LADV…GAIP), 379–401 (GGTT…LGAL), 422–444 (LGLA…AALT), and 454–476 (GGLV…VLRL).

It belongs to the AAE transporter (TC 2.A.81) family.

The protein localises to the cell membrane. This is an uncharacterized protein from Corynebacterium glutamicum (strain ATCC 13032 / DSM 20300 / JCM 1318 / BCRC 11384 / CCUG 27702 / LMG 3730 / NBRC 12168 / NCIMB 10025 / NRRL B-2784 / 534).